We begin with the raw amino-acid sequence, 346 residues long: Patr class I histocompatibility antigen, CH28 alpha chain (346 aa).

The first 21 residues, 1–21 (MAPRSLLLLFSGALALTETWA), serve as a signal peptide directing secretion. The alpha-1 stretch occupies residues 22–111 (GSHSLRYFST…LLRRYNQSEA (90 aa)). Residues 22-305 (GSHSLRYFST…EQSPQPTIPI (284 aa)) are Extracellular-facing. A glycan (N-linked (GlcNAc...) asparagine) is linked at Asn107. Residues 112–203 (GSHTLQGMNG…ENGKETLQRA (92 aa)) are alpha-2. Cystine bridges form between Cys122/Cys185 and Cys224/Cys280. Positions 204–295 (DPPKAHIAHH…GLPQPLTLRW (92 aa)) are alpha-3. An Ig-like C1-type domain is found at 206–294 (PKAHIAHHPI…EGLPQPLTLR (89 aa)). Residues 296 to 305 (EQSPQPTIPI) are connecting peptide. Residues 306–329 (VGIVAGLVVLGAVVTGAVVAAVMW) traverse the membrane as a helical segment. Over 330–346 (RKKSSDRNRGSYSQAAV) the chain is Cytoplasmic.

This sequence belongs to the MHC class I family. In terms of assembly, heterodimer of an alpha chain and a beta chain (beta-2-microglobulin).

It localises to the membrane. Involved in the presentation of foreign antigens to the immune system. The chain is Patr class I histocompatibility antigen, CH28 alpha chain from Pan troglodytes (Chimpanzee).